We begin with the raw amino-acid sequence, 690 residues long: Iron-regulated transcriptional activator AFT1 (690 aa).

Residues 1–21 (MEGFNPADIEHASPINSSDSH) are disordered. D110 is a binding site for Zn(2+). Residues K111, K115, I131, E132, R133, S134, D135, and K138 each contribute to the DNA site. Residue C143 coordinates Zn(2+). Residues 148 to 159 (RGRNARRKRKDK) are compositionally biased toward basic residues. Residues 148–205 (RGRNARRKRKDKPKGQDHEDEKSKINDDELEYASPSNATVTNGPQTSPDQTSSIKPKK) form a disordered region. Residues 160-174 (PKGQDHEDEKSKIND) are compositionally biased toward basic and acidic residues. Polar residues predominate over residues 181–201 (SPSNATVTNGPQTSPDQTSSI). Residue C215 coordinates Zn(2+). Residue K226 coordinates DNA. Positions 239 and 241 each coordinate Zn(2+). Residue N263 participates in DNA binding. The CDC [2Fe-2S] cluster binding motif signature appears at 291–293 (CDC). Disordered stretches follow at residues 335–357 (PCLP…PKSQ) and 612–655 (SSNE…VQKD). A compositionally biased stretch (polar residues) spans 339–351 (SVNNTGSINTNNV). Residues 621-638 (HQYGPQQQPPQQLQYHQN) are compositionally biased toward low complexity. Over residues 639–649 (QPHDGHNHEQH) the composition is skewed to basic and acidic residues.

Homodimer. Dimerization decreases the DNA-binding activity.

It is found in the nucleus. With respect to regulation, dimerization via the binding of Fe(2+) or a [2Fe-2S] cluster decreases the DNA-binding activity. Functionally, transcription factor that activates the genes for FRE1, FRE2 and FET3 in response to iron deprivationand thereby plays a central role in iron homeostasis. Also required for the expression of LSO1. Recognizes the consensus iron-responsive element (Fe-RE) sequence 5'-CACCC-3' in the promoters of target genes. Iron could interact directly with AFT1 and inhibits its activity. In high iron condition, the presence of Fe(2+) or [2Fe-2S] cluster leads to dimerization, which in turn leads to a decrease in DNA affinity. In Saccharomyces cerevisiae (strain ATCC 204508 / S288c) (Baker's yeast), this protein is Iron-regulated transcriptional activator AFT1.